We begin with the raw amino-acid sequence, 400 residues long: Enoyl-[acyl-carrier-protein] reductase [NADH] (400 aa).

Residues Phe74 to Glu75, Asp111 to Ala112, and Val139 to Ala140 contribute to the NAD(+) site. Tyr225 provides a ligand contact to substrate. Tyr235 serves as the catalytic Proton donor. NAD(+) is bound by residues Lys244 and Val273–Thr275.

It belongs to the TER reductase family. Monomer.

The enzyme catalyses a 2,3-saturated acyl-[ACP] + NAD(+) = a (2E)-enoyl-[ACP] + NADH + H(+). It functions in the pathway lipid metabolism; fatty acid biosynthesis. Involved in the final reduction of the elongation cycle of fatty acid synthesis (FAS II). Catalyzes the reduction of a carbon-carbon double bond in an enoyl moiety that is covalently linked to an acyl carrier protein (ACP). The chain is Enoyl-[acyl-carrier-protein] reductase [NADH] from Psychromonas ingrahamii (strain DSM 17664 / CCUG 51855 / 37).